The chain runs to 1432 residues: Probable ATP-dependent RNA helicase spindle-E (1432 aa).

Residues L124 to V291 enclose the Helicase ATP-binding domain. G137 to T144 contributes to the ATP binding site. Residues D237 to H240 carry the DEAH box motif. Residues K337 to E524 form the Helicase C-terminal domain. Residues A936–Q999 enclose the Tudor domain.

It belongs to the DEAD box helicase family. DEAH subfamily.

The protein resides in the cytoplasm. The catalysed reaction is ATP + H2O = ADP + phosphate + H(+). Its function is as follows. Probable ATP-binding RNA helicase which plays a central role during spermatogenesis and oogenesis by repressing transposable elements and preventing their mobilization, which is essential for the germline integrity. Acts via the piRNA metabolic process, which mediates the repression of transposable elements during meiosis by forming complexes composed of piRNAs and Piwi and govern the methylation and subsequent repression of transposons. Involved in the repression of LTR retrotransposon copia. Also involved in telomere regulation by repressing specialized telomeric retroelements HeT-A, TAHRE, and TART; Drosophila telomeres being maintained by transposition of specialized telomeric retroelements. Involved in telomeric trans-silencing, a repression mechanism by which a transposon or a transgene inserted in subtelomeric heterochromatin has the capacity to repress in trans in the female germline, a homologous transposon, or transgene located in euchromatin. Involved in the repression of testis-expressed Stellate genes by the homologous Su(Ste) repeats. Required for anteroposterior and dorsoventral axis formation during oogenesis. The sequence is that of Probable ATP-dependent RNA helicase spindle-E (spn-E) from Drosophila erecta (Fruit fly).